The sequence spans 314 residues: Aspartate carbamoyltransferase catalytic subunit (314 aa).

Carbamoyl phosphate is bound by residues R58 and T59. K86 serves as a coordination point for L-aspartate. Carbamoyl phosphate contacts are provided by R108, H136, and Q139. 2 residues coordinate L-aspartate: R169 and R223. Carbamoyl phosphate contacts are provided by G264 and P265.

The protein belongs to the aspartate/ornithine carbamoyltransferase superfamily. ATCase family. Heterododecamer (2C3:3R2) of six catalytic PyrB chains organized as two trimers (C3), and six regulatory PyrI chains organized as three dimers (R2).

It carries out the reaction carbamoyl phosphate + L-aspartate = N-carbamoyl-L-aspartate + phosphate + H(+). It participates in pyrimidine metabolism; UMP biosynthesis via de novo pathway; (S)-dihydroorotate from bicarbonate: step 2/3. Catalyzes the condensation of carbamoyl phosphate and aspartate to form carbamoyl aspartate and inorganic phosphate, the committed step in the de novo pyrimidine nucleotide biosynthesis pathway. The sequence is that of Aspartate carbamoyltransferase catalytic subunit from Opitutus terrae (strain DSM 11246 / JCM 15787 / PB90-1).